Reading from the N-terminus, the 651-residue chain is Probable endo-1,3(4)-beta-glucanase NFIA_089530 (651 aa).

Positions 1–21 (MAPSSLFLSVGSLIASSLVSA) are cleaved as a signal peptide. The region spanning 36–289 (ESWQGESFIN…WAGNVFAEST (254 aa)) is the GH16 domain. A glycan (N-linked (GlcNAc...) asparagine) is linked at N64. Catalysis depends on E145, which acts as the Nucleophile. The active-site Proton donor is the E150. A glycan (N-linked (GlcNAc...) asparagine) is linked at N200. The segment covering 364–378 (PVPAETTAVPQPAQT) has biased composition (low complexity). Disordered stretches follow at residues 364 to 422 (PVPA…ESTS) and 508 to 557 (SEIP…PVPA). Polar residues-rich tracts occupy residues 379–400 (NTVA…TTVP) and 520–535 (QAVS…TAQG). The segment covering 542–557 (SIASASAAPSTIPVPA) has biased composition (low complexity). N629 is lipidated: GPI-anchor amidated asparagine. Positions 630–651 (GANRMSVGLSGLIGVMFIAALA) are cleaved as a propeptide — removed in mature form.

The protein belongs to the glycosyl hydrolase 16 family.

It localises to the cell membrane. The catalysed reaction is Endohydrolysis of (1-&gt;3)- or (1-&gt;4)-linkages in beta-D-glucans when the glucose residue whose reducing group is involved in the linkage to be hydrolyzed is itself substituted at C-3.. Its function is as follows. Mixed-linked glucanase involved in the degradation of complex natural cellulosic substrates. In Neosartorya fischeri (strain ATCC 1020 / DSM 3700 / CBS 544.65 / FGSC A1164 / JCM 1740 / NRRL 181 / WB 181) (Aspergillus fischerianus), this protein is Probable endo-1,3(4)-beta-glucanase NFIA_089530.